A 380-amino-acid polypeptide reads, in one-letter code: Chaperone protein DnaJ (380 aa).

Residues 5–70 (DFYEVLGVSK…NLRARYDQYG (66 aa)) enclose the J domain. The segment at 135–213 (GVSKEIKVPS…CHGEGRYQKT (79 aa)) adopts a CR-type zinc-finger fold. Zn(2+)-binding residues include Cys148, Cys151, Cys165, Cys168, Cys187, Cys190, Cys201, and Cys204. CXXCXGXG motif repeat units lie at residues 148–155 (CEVCNGSG), 165–172 (CPTCHGAG), 187–194 (CPHCHGRG), and 201–208 (CRKCHGEG).

It belongs to the DnaJ family. In terms of assembly, homodimer. Requires Zn(2+) as cofactor.

The protein resides in the cytoplasm. Functionally, participates actively in the response to hyperosmotic and heat shock by preventing the aggregation of stress-denatured proteins and by disaggregating proteins, also in an autonomous, DnaK-independent fashion. Unfolded proteins bind initially to DnaJ; upon interaction with the DnaJ-bound protein, DnaK hydrolyzes its bound ATP, resulting in the formation of a stable complex. GrpE releases ADP from DnaK; ATP binding to DnaK triggers the release of the substrate protein, thus completing the reaction cycle. Several rounds of ATP-dependent interactions between DnaJ, DnaK and GrpE are required for fully efficient folding. Also involved, together with DnaK and GrpE, in the DNA replication of plasmids through activation of initiation proteins. This Aeromonas salmonicida (strain A449) protein is Chaperone protein DnaJ.